A 97-amino-acid polypeptide reads, in one-letter code: Nucleoid-associated protein Hac_0048 (97 aa).

This sequence belongs to the YbaB/EbfC family. Homodimer.

It localises to the cytoplasm. The protein localises to the nucleoid. Binds to DNA and alters its conformation. May be involved in regulation of gene expression, nucleoid organization and DNA protection. The protein is Nucleoid-associated protein Hac_0048 of Helicobacter acinonychis (strain Sheeba).